The chain runs to 217 residues: 3,4-dihydroxy-2-butanone 4-phosphate synthase (217 aa).

D-ribulose 5-phosphate is bound by residues 37 to 38, D42, 150 to 154, and E174; these read RE and RRGHT. E38 contributes to the Mg(2+) binding site. Mg(2+) is bound at residue H153.

Belongs to the DHBP synthase family. Homodimer. Mg(2+) serves as cofactor. The cofactor is Mn(2+).

The catalysed reaction is D-ribulose 5-phosphate = (2S)-2-hydroxy-3-oxobutyl phosphate + formate + H(+). Its pathway is cofactor biosynthesis; riboflavin biosynthesis; 2-hydroxy-3-oxobutyl phosphate from D-ribulose 5-phosphate: step 1/1. In terms of biological role, catalyzes the conversion of D-ribulose 5-phosphate to formate and 3,4-dihydroxy-2-butanone 4-phosphate. The polypeptide is 3,4-dihydroxy-2-butanone 4-phosphate synthase (Shewanella baltica (strain OS155 / ATCC BAA-1091)).